The sequence spans 272 residues: Putative phosphoenolpyruvate synthase regulatory protein (272 aa).

152 to 159 (GVSRCGKT) provides a ligand contact to ADP.

Belongs to the pyruvate, phosphate/water dikinase regulatory protein family. PSRP subfamily.

The catalysed reaction is [pyruvate, water dikinase] + ADP = [pyruvate, water dikinase]-phosphate + AMP + H(+). The enzyme catalyses [pyruvate, water dikinase]-phosphate + phosphate + H(+) = [pyruvate, water dikinase] + diphosphate. Functionally, bifunctional serine/threonine kinase and phosphorylase involved in the regulation of the phosphoenolpyruvate synthase (PEPS) by catalyzing its phosphorylation/dephosphorylation. In Pseudomonas savastanoi pv. phaseolicola (strain 1448A / Race 6) (Pseudomonas syringae pv. phaseolicola (strain 1448A / Race 6)), this protein is Putative phosphoenolpyruvate synthase regulatory protein.